Reading from the N-terminus, the 368-residue chain is 3-dehydroquinate synthase (368 aa).

Residues 71–76 (DGESFK), 105–109 (GVIGD), 129–130 (TT), K142, K151, and 169–172 (TLRT) each bind NAD(+). Positions 184, 247, and 264 each coordinate Zn(2+).

Belongs to the sugar phosphate cyclases superfamily. Dehydroquinate synthase family. Co(2+) is required as a cofactor. It depends on Zn(2+) as a cofactor. The cofactor is NAD(+).

Its subcellular location is the cytoplasm. It catalyses the reaction 7-phospho-2-dehydro-3-deoxy-D-arabino-heptonate = 3-dehydroquinate + phosphate. It participates in metabolic intermediate biosynthesis; chorismate biosynthesis; chorismate from D-erythrose 4-phosphate and phosphoenolpyruvate: step 2/7. In terms of biological role, catalyzes the conversion of 3-deoxy-D-arabino-heptulosonate 7-phosphate (DAHP) to dehydroquinate (DHQ). The protein is 3-dehydroquinate synthase of Ralstonia pickettii (strain 12J).